The chain runs to 243 residues: MSTSRAPETTSAAPLSAEQSASLYRLMTWLSPAFPVGAFSYSSGLEWAVEAGDVIDAPSLRDWLTAMLEHGAGFCDGVFLAHAYRAVAAADETALRHVAELATAFVPSAERHLETTAQGKAFIEIVRNAWPSDGLACAVDACAGALAYPVAVGLVSATHGVPLAATLHAFLHAVVSNWISAGARLVPLGQTDSQRVLAALEPAVIAAGDRAREASLDDLGSATFRADLASLRHETQYTRLFRS.

It belongs to the UreF family. As to quaternary structure, ureD, UreF and UreG form a complex that acts as a GTP-hydrolysis-dependent molecular chaperone, activating the urease apoprotein by helping to assemble the nickel containing metallocenter of UreC. The UreE protein probably delivers the nickel.

It is found in the cytoplasm. In terms of biological role, required for maturation of urease via the functional incorporation of the urease nickel metallocenter. The sequence is that of Urease accessory protein UreF from Rhodopseudomonas palustris (strain BisB5).